Consider the following 360-residue polypeptide: Aminomethyltransferase (360 aa).

The protein belongs to the GcvT family. As to quaternary structure, the glycine cleavage system is composed of four proteins: P, T, L and H.

The enzyme catalyses N(6)-[(R)-S(8)-aminomethyldihydrolipoyl]-L-lysyl-[protein] + (6S)-5,6,7,8-tetrahydrofolate = N(6)-[(R)-dihydrolipoyl]-L-lysyl-[protein] + (6R)-5,10-methylene-5,6,7,8-tetrahydrofolate + NH4(+). Functionally, the glycine cleavage system catalyzes the degradation of glycine. In Legionella pneumophila subsp. pneumophila (strain Philadelphia 1 / ATCC 33152 / DSM 7513), this protein is Aminomethyltransferase.